Here is a 234-residue protein sequence, read N- to C-terminus: Uridylate kinase (234 aa).

9 to 12 is an ATP binding site; the sequence is KLSG. Glycine 51 serves as a coordination point for UMP. ATP contacts are provided by glycine 52 and arginine 56. Residues aspartate 71 and 132-139 contribute to the UMP site; that span reads CGNPFFTT. ATP contacts are provided by threonine 159, tyrosine 165, and aspartate 168.

The protein belongs to the UMP kinase family. As to quaternary structure, homohexamer.

The protein localises to the cytoplasm. It catalyses the reaction UMP + ATP = UDP + ADP. The protein operates within pyrimidine metabolism; CTP biosynthesis via de novo pathway; UDP from UMP (UMPK route): step 1/1. Inhibited by UTP. In terms of biological role, catalyzes the reversible phosphorylation of UMP to UDP. The protein is Uridylate kinase of Prochlorococcus marinus subsp. pastoris (strain CCMP1986 / NIES-2087 / MED4).